Consider the following 114-residue polypeptide: Fumarate reductase subunit D (114 aa).

3 helical membrane-spanning segments follow: residues 25-45 (SGLA…FGII), 50-70 (IIAF…TIFP), and 94-114 (LIFY…VIAI).

This sequence belongs to the FrdD family. In terms of assembly, part of an enzyme complex containing four subunits: a flavoprotein (FrdA), an iron-sulfur protein (FrdB), and two hydrophobic anchor proteins (FrdC and FrdD).

The protein resides in the cell inner membrane. Anchors the catalytic components of the fumarate reductase complex to the cell membrane, binds quinones. This Mannheimia succiniciproducens (strain KCTC 0769BP / MBEL55E) protein is Fumarate reductase subunit D.